Here is a 312-residue protein sequence, read N- to C-terminus: Putative S-adenosyl-L-methionine-dependent methyltransferase BCG_1768c (312 aa).

Residues aspartate 130 and 159-160 each bind S-adenosyl-L-methionine; that span reads DL.

The protein belongs to the UPF0677 family.

Its function is as follows. Exhibits S-adenosyl-L-methionine-dependent methyltransferase activity. The protein is Putative S-adenosyl-L-methionine-dependent methyltransferase BCG_1768c of Mycobacterium bovis (strain BCG / Pasteur 1173P2).